The primary structure comprises 116 residues: Large ribosomal subunit protein bL17 (116 aa).

Belongs to the bacterial ribosomal protein bL17 family. As to quaternary structure, part of the 50S ribosomal subunit. Contacts protein L32.

The protein is Large ribosomal subunit protein bL17 of Synechococcus sp. (strain JA-3-3Ab) (Cyanobacteria bacterium Yellowstone A-Prime).